The following is a 544-amino-acid chain: Protein kinase dsk1 (544 aa).

The Protein kinase domain maps to 81-516 (YVVERKLGWG…AGYMSNSPWL (436 aa)). ATP contacts are provided by residues 87–95 (LGWGHFSTV) and Lys110. The Proton acceptor role is filled by Asp214. 2 disordered regions span residues 235–299 (PATT…SSPF) and 316–341 (ISLRDSQKHNSHPNSPFSSGDNSLIL). Residues 237–254 (TTSSPTSNTSSSKTRNNT) show a composition bias toward low complexity. Polar residues-rich tracts occupy residues 281 to 299 (KNPTKNSKPAGQVIPSSPF) and 327 to 337 (HPNSPFSSGDN).

It belongs to the protein kinase superfamily. Ser/Thr protein kinase family. Phosphorylated on Ser residue(s).

It localises to the cytoplasm. It is found in the nucleus. The catalysed reaction is L-seryl-[protein] + ATP = O-phospho-L-seryl-[protein] + ADP + H(+). It catalyses the reaction L-threonyl-[protein] + ATP = O-phospho-L-threonyl-[protein] + ADP + H(+). May play an important role in mitotic control by altering cellular location, degree of phosphorylation and kinase activity. Abundant expression accelerates the exit when cells are in M-phase and also delays the entry into mitosis when cells are in G2. Phosphorylates prp2 in vitro and so may have a role in co-ordinating pre-mRNA splicing with the progression of the cell division cycle. The protein is Protein kinase dsk1 (dsk1) of Schizosaccharomyces pombe (strain 972 / ATCC 24843) (Fission yeast).